Consider the following 289-residue polypeptide: uncharacterized protein (289 aa).

Helical transmembrane passes span 4-24 (NLLA…GTVV), 44-64 (LNAL…LAYF), 68-88 (VALG…SLMF), 106-126 (IFWA…GRPL), 138-158 (IPVL…AEYV), 166-186 (ILGL…KAAV), 196-216 (GLIL…GTIV), 230-250 (LPAM…LVLG), and 258-278 (WEWI…IALS).

It is found in the cell membrane. This is an uncharacterized protein from Corynebacterium glutamicum (strain ATCC 13032 / DSM 20300 / JCM 1318 / BCRC 11384 / CCUG 27702 / LMG 3730 / NBRC 12168 / NCIMB 10025 / NRRL B-2784 / 534).